A 205-amino-acid polypeptide reads, in one-letter code: MEVDINGVNRTNNSVPSTAEGSSPSKPDPEKPRCSSTPCSPIRRTVSGYQILHMDANFLVGFTTGGELLKLAQKCATTEETPGESLPAFRSKQLESGLSRSSRIYKARGRQFQPYDIPAVNGRRRRRMPSSGDKCNKAVPYEPYKAAHGPLPLCLLKGKRAHSKSLDYLNLDKMNIKESADTEVLQYQLQHLTLRGDRVFARNNT.

The interval 1 to 40 (MEVDINGVNRTNNSVPSTAEGSSPSKPDPEKPRCSSTPCS) is disordered. Positions 8–25 (VNRTNNSVPSTAEGSSPS) are enriched in polar residues.

This sequence belongs to the UNC119-binding protein family. In terms of assembly, interacts with unc119 family proteins; interaction preferentially takes place when unc119 proteins are unliganded with myristoylated proteins.

The protein localises to the cytoplasm. The protein resides in the cell projection. It is found in the cilium. Functionally, may play a role in immune regulation through regulation of the macrophage function. May also play a role in trafficking of proteins via its interaction with unc119 family cargo adapters. May play a role in ciliary membrane localization. In Xenopus laevis (African clawed frog), this protein is Macrophage immunometabolism regulator (macir).